The following is a 1087-amino-acid chain: Apoptosis-stimulating of p53 protein 1 (1087 aa).

The interval 82–122 (HEDSPTESSEQGARQTQEQRTQRSVVNVPGEKRTENGVGNP) is disordered. Residues 87–106 (TESSEQGARQTQEQRTQRSV) show a composition bias toward polar residues. Phosphoserine occurs at positions 332 and 335. 3 disordered regions span residues 374-415 (SSAA…GMEG), 442-721 (IGKG…PNIQ), and 734-878 (GMEG…TGHG). Positions 393–405 (KQNSASVKSTQMT) are enriched in polar residues. Residues 445–458 (GPPPIPGVGKPLPP) show a composition bias toward pro residues. Positions 459-476 (SYGTYPSSGPLGPGSTSS) are enriched in low complexity. Residues 506–520 (NAPQPGSSQQIQQRI) are compositionally biased toward polar residues. Over residues 523–536 (PPSPTYPPAGPPAF) the composition is skewed to pro residues. Arg552 is subject to Asymmetric dimethylarginine. Residues 570–589 (QTVNSSSIYSMYLQQATPPK) show a composition bias toward polar residues. Over residues 610-625 (PVLPSGSASPSPLPFL) the composition is skewed to low complexity. Residues Ser679 and Ser708 each carry the phosphoserine modification. A compositionally biased stretch (polar residues) spans 805 to 831 (PQTTHQTAEPTEDNNNNVAPVPSTEQI). 2 ANK repeats span residues 917-949 (EGIT…AADS) and 950-982 (DGWT…ASTI). An SH3 domain is found at 1016–1078 (MNKGTVYALW…PKNLLGLYPR (63 aa)).

This sequence belongs to the ASPP family. Interacts with P53/TP53; the interaction promotes pro-apoptotic activity.

It is found in the cytoplasm. It localises to the nucleus. Regulator that plays a central role in regulation of apoptosis via its interaction with p53/TP53. Regulates TP53 by enhancing the DNA binding and transactivation function of TP53 on the promoters of proapoptotic genes in vivo. The protein is Apoptosis-stimulating of p53 protein 1 (Ppp1r13b) of Mus musculus (Mouse).